Consider the following 328-residue polypeptide: Malate dehydrogenase (328 aa).

12–18 (GAAGQIG) contacts NAD(+). 2 residues coordinate substrate: Arg-95 and Arg-101. NAD(+) is bound by residues Asn-108, Gln-115, and 132-134 (VGN). Substrate-binding residues include Asn-134 and Arg-165. The Proton acceptor role is filled by His-190.

This sequence belongs to the LDH/MDH superfamily. MDH type 2 family.

The catalysed reaction is (S)-malate + NAD(+) = oxaloacetate + NADH + H(+). In terms of biological role, catalyzes the reversible oxidation of malate to oxaloacetate. The polypeptide is Malate dehydrogenase (Polaromonas naphthalenivorans (strain CJ2)).